Reading from the N-terminus, the 533-residue chain is Calcium-dependent protein kinase 8 (533 aa).

The interval 1-21 (MGNCCASPGSETGSKKGKPKI) is disordered. G2 carries the N-myristoyl glycine lipid modification. The 259-residue stretch at 57–315 (YDLGREVGRG…AAQVLEHSWI (259 aa)) folds into the Protein kinase domain. Residues 63-71 (VGRGEFGIT) and K86 each bind ATP. D181 serves as the catalytic Proton acceptor. S221 carries the post-translational modification Phosphoserine. The tract at residues 321-351 (APNVSLGETVKARLKQFSVMNKLKKRALRVI) is autoinhibitory domain. 4 EF-hand domains span residues 358–394 (EEVA…GQQQ), 395–430 (IPDT…LKKM), 431–466 (ANDE…EVDT), and 467–502 (NSEE…GTDW). Ca(2+) is bound by residues D371, T375, K377, E382, D408, D410, D412, T414, E419, D444, N446, S448, Y450, E455, D480, D482, D484, and R486. S488 carries the post-translational modification Phosphoserine. Ca(2+) is bound at residue E491. The residue at position 526 (S526) is a Phosphoserine.

The protein belongs to the protein kinase superfamily. Ser/Thr protein kinase family. CDPK subfamily.

Its subcellular location is the cell membrane. The enzyme catalyses L-seryl-[protein] + ATP = O-phospho-L-seryl-[protein] + ADP + H(+). The catalysed reaction is L-threonyl-[protein] + ATP = O-phospho-L-threonyl-[protein] + ADP + H(+). Its activity is regulated as follows. Activated by calcium. Autophosphorylation may play an important role in the regulation of the kinase activity. In terms of biological role, may play a role in signal transduction pathways that involve calcium as a second messenger. This chain is Calcium-dependent protein kinase 8 (CPK8), found in Arabidopsis thaliana (Mouse-ear cress).